The sequence spans 45 residues: Osteocalcin 1 (45 aa).

The Gla domain maps to 1–41 (AAGQLSLTQLESLREVCELNLACEHMMDTEGIIAAYTAYYG). Positions 11, 15, 18, and 24 each coordinate Ca(2+). 3 positions are modified to 4-carboxyglutamate: Glu11, Glu15, and Glu18. The cysteines at positions 17 and 23 are disulfide-linked.

It belongs to the osteocalcin/matrix Gla protein family. In terms of processing, gamma-carboxyglutamate residues are formed by vitamin K dependent carboxylation by GGCX. These residues are essential for the binding of calcium.

It localises to the secreted. Functionally, the carboxylated form is one of the main organic components of the bone matrix, which constitutes 1-2% of the total bone protein. The carboxylated form binds strongly to apatite and calcium. This Diplodus sargus (White seabream) protein is Osteocalcin 1.